The primary structure comprises 787 residues: Integrin beta-3 (787 aa).

A signal peptide spans 1–25 (MRTRRPGQLWATLLALGALAGVVVG). Residues 27-717 (SNICTTRGVN…EEPECPKGPD (691 aa)) lie on the Extracellular side of the membrane. Positions 29 to 75 (ICTTRGVNSCQQCLAVSPVCAWCSDESLPQNSPRCNLKKNLLKDKCS) constitute a PSI domain. 19 disulfide bridges follow: cysteine 30-cysteine 48, cysteine 38-cysteine 460, cysteine 41-cysteine 63, cysteine 51-cysteine 74, cysteine 202-cysteine 209, cysteine 257-cysteine 298, cysteine 399-cysteine 411, cysteine 431-cysteine 458, cysteine 462-cysteine 482, cysteine 473-cysteine 485, cysteine 487-cysteine 496, cysteine 498-cysteine 528, cysteine 511-cysteine 526, cysteine 520-cysteine 531, cysteine 533-cysteine 546, cysteine 548-cysteine 569, cysteine 553-cysteine 567, cysteine 561-cysteine 572, and cysteine 574-cysteine 583. The region spanning 134–376 (DYPVDIYYLM…QLIVDAYGKI (243 aa)) is the VWFA domain. Mg(2+) is bound by residues serine 146 and serine 148. Residues serine 148, aspartate 151, aspartate 152, and aspartate 183 each coordinate Ca(2+). The tract at residues 202-209 (CYTMKSTC) is CX3CL1-binding. The segment at 202–209 (CYTMKSTC) is involved in CX3CL1-, NRG1-, FGF1- and IGF1-binding. Ca(2+)-binding residues include asparagine 240, aspartate 242, proline 244, glutamate 245, and aspartate 276. Glutamate 245 contacts Mg(2+). Positions 292–312 (LPNDGRCHIGPDNHYSASTTM) are CX3CL1-binding. N-linked (GlcNAc...) asparagine glycans are attached at residues asparagine 345 and asparagine 396. I-EGF domains lie at 462 to 497 (CQAFAQPLSPRCNNGNGTFECGVCRCDQGWLGSMCE), 498 to 547 (CSEE…KYCE), 548 to 584 (CDDFSCVRYKGEMCSGHGQCNCGDCVCDSDWTGYYCN), and 585 to 624 (CTTRTDTCMSTNGLLCSGRGNCECGSCVCVQPGSYGDTCE). The N-linked (GlcNAc...) asparagine glycan is linked to asparagine 477. N-linked (GlcNAc...) asparagine glycosylation occurs at asparagine 584. Cystine bridges form between cysteine 585-cysteine 608, cysteine 592-cysteine 606, cysteine 600-cysteine 611, cysteine 613-cysteine 623, cysteine 626-cysteine 629, cysteine 633-cysteine 680, cysteine 639-cysteine 660, cysteine 642-cysteine 656, and cysteine 688-cysteine 712. N-linked (GlcNAc...) asparagine glycosylation is present at asparagine 679. The chain crosses the membrane as a helical span at residues 718-738 (ILVVLLSVMGAILLIGLATLL). At 739–787 (IWKLLITIHDRKEFAKFEEERARAKWDTANNPLYKEATSTFTNITYRGT) the chain is on the cytoplasmic side. Threonine 766 is modified (phosphothreonine). At tyrosine 772 the chain carries Phosphotyrosine. Residues 776–782 (TSTFTNI) carry the LIR motif. The residue at position 778 (threonine 778) is a Phosphothreonine. Tyrosine 784 carries the post-translational modification Phosphotyrosine.

This sequence belongs to the integrin beta chain family. As to quaternary structure, heterodimer of an alpha and a beta subunit. Beta-3 (ITGB3) associates with either alpha-IIB (ITGA2B) or alpha-V (ITGAV). Interacts with FLNB and COMP. Interacts with PDIA6 following platelet stimulation. Interacts with SYK; upon activation by ITGB3 promotes platelet adhesion. Interacts with MYO10. Interacts with DAB2. Interacts with FERMT2. Integrin ITGAV:ITGB3 interacts with FBLN5 (via N-terminus). Interacts with EMP2; regulates the levels of the heterodimer ITGA5:ITGB3 integrin expression on the plasma membrane. ITGAV:ITGB3 interacts with CCN3. ITGAV:ITGB3 and ITGA2B:ITGB3 interact with SELP (via C-type lectin domain); the interaction mediates cell-cell interaction and adhesion. ITGAV:ITGB3 interacts with AGRA2. ITGAV:ITGB3 is found in a ternary complex with CX3CR1 and CX3CL1. ITGAV:ITGB3 is found in a ternary complex with NRG1 and ERBB3. ITGAV:ITGB3 is found in a ternary complex with FGF1 and FGFR1. ITGAV:ITGB3 interacts with FGF2; it is likely that FGF2 can simultaneously bind ITGAV:ITGB3 and FGF receptors. ITGAV:ITGB3 binds to IL1B. ITGAV:ITGB3 is found in a ternary complex with IGF1 and IGF1R. ITGAV:ITGB3 interacts with IGF2. ITGAV:ITGB3 interacts with FBN1. ITGAV:ITGB3 interacts with CD9, CD81 and CD151 (via second extracellular domain). Interacts (via the allosteric site (site 2)) with CXCL12 in a CXCR4-independent manner. Interacts with MXRA8/DICAM; the interaction inhibits ITGAV:ITGB3 heterodimer formation. ITGAV:ITGB3 interacts with PTN. Forms a complex with PTPRZ1 and PTN that stimulates endothelial cell migration through ITGB3 Tyr-772 phosphorylation. ITGAV:ITGB3 interacts with SLC6A4. Interacts with SLC6A4 (via C-terminus); this interaction regulates SLC6A4 trafficking. ITGA2B:ITGB3 interacts with PPIA/CYPA; the interaction is ROS and PPIase activity-dependent and is increased in the presence of thrombin. Interacts with tensin TNS3; TNS3 also interacts with PEAK1, thus acting as an adapter molecule to bridge the association of PEAK1 with ITGB3. Interacts with TM4SF19. Post-translationally, phosphorylated on tyrosine residues in response to thrombin-induced platelet aggregation. Probably involved in outside-in signaling.

Its subcellular location is the cell membrane. It is found in the cell projection. The protein localises to the lamellipodium membrane. The protein resides in the cell junction. It localises to the focal adhesion. Its subcellular location is the postsynaptic cell membrane. It is found in the synapse. Its function is as follows. Integrin alpha-V/beta-3 (ITGAV:ITGB3) is a receptor for cytotactin, fibronectin, laminin, matrix metalloproteinase-2, osteopontin, osteomodulin, prothrombin, thrombospondin, vitronectin and von Willebrand factor. Integrin alpha-IIB/beta-3 (ITGA2B:ITGB3) is a receptor for fibronectin, fibrinogen, plasminogen, prothrombin, thrombospondin and vitronectin. Integrins alpha-IIB/beta-3 and alpha-V/beta-3 recognize the sequence R-G-D in a wide array of ligands. Integrin alpha-IIB/beta-3 recognizes the sequence H-H-L-G-G-G-A-K-Q-A-G-D-V in fibrinogen gamma chain. Following activation integrin alpha-IIB/beta-3 brings about platelet/platelet interaction through binding of soluble fibrinogen. This step leads to rapid platelet aggregation which physically plugs ruptured endothelial surfaces. Fibrinogen binding enhances SELP expression in activated platelets. ITGAV:ITGB3 binds to fractalkine (CX3CL1) and acts as its coreceptor in CX3CR1-dependent fractalkine signaling. ITGAV:ITGB3 binds to NRG1 (via EGF domain) and this binding is essential for NRG1-ERBB signaling. ITGAV:ITGB3 binds to FGF1 and this binding is essential for FGF1 signaling. ITGAV:ITGB3 binds to FGF2 and this binding is essential for FGF2 signaling. ITGAV:ITGB3 binds to IGF1 and this binding is essential for IGF1 signaling. ITGAV:ITGB3 binds to IGF2 and this binding is essential for IGF2 signaling. ITGAV:ITGB3 binds to IL1B and this binding is essential for IL1B signaling. ITGAV:ITGB3 binds to PLA2G2A via a site (site 2) which is distinct from the classical ligand-binding site (site 1) and this induces integrin conformational changes and enhanced ligand binding to site 1. ITGAV:ITGB3 acts as a receptor for fibrillin-1 (FBN1) and mediates R-G-D-dependent cell adhesion to FBN1. In brain, plays a role in synaptic transmission and plasticity. Involved in the regulation of the serotonin neurotransmission, is required to localize to specific compartments within the synapse the serotonin receptor SLC6A4 and for an appropriate reuptake of serotonin. Controls excitatory synaptic strength by regulating GRIA2-containing AMPAR endocytosis, which affects AMPAR abundance and composition. ITGAV:ITGB3 acts as a receptor for CD40LG. ITGAV:ITGB3 acts as a receptor for IBSP and promotes cell adhesion and migration to IBSP. This chain is Integrin beta-3, found in Rattus norvegicus (Rat).